Reading from the N-terminus, the 378-residue chain is Mannitol-1-phosphate 5-dehydrogenase (378 aa).

4–15 (SVHFGAGNIGRG) serves as a coordination point for NAD(+).

This sequence belongs to the mannitol dehydrogenase family.

It catalyses the reaction D-mannitol 1-phosphate + NAD(+) = beta-D-fructose 6-phosphate + NADH + H(+). The protein is Mannitol-1-phosphate 5-dehydrogenase of Streptococcus pneumoniae (strain ATCC BAA-255 / R6).